A 719-amino-acid chain; its full sequence is UvrABC system protein B (719 aa).

Residues 49-435 enclose the Helicase ATP-binding domain; that stretch reads RRINAGERDV…TGGEFVEQVI (387 aa). 62–69 is an ATP binding site; that stretch reads GATGTGKS. Residues 115–138 carry the Beta-hairpin motif; that stretch reads YYDYYQPEAYIAQTDTYIEKDSSI. Positions 453–606 constitute a Helicase C-terminal domain; it reads QIDDLIGEIR…QIAYNEANGI (154 aa). A disordered region spans residues 635–654; it reads GGSGRNASRGRRAQGEPGRA. In terms of domain architecture, UVR spans 674 to 709; sequence ADLIKDLTAQMMAAARDLQFELAARFRDEIADLKRE.

It belongs to the UvrB family. As to quaternary structure, forms a heterotetramer with UvrA during the search for lesions. Interacts with UvrC in an incision complex.

The protein resides in the cytoplasm. In terms of biological role, the UvrABC repair system catalyzes the recognition and processing of DNA lesions. A damage recognition complex composed of 2 UvrA and 2 UvrB subunits scans DNA for abnormalities. Upon binding of the UvrA(2)B(2) complex to a putative damaged site, the DNA wraps around one UvrB monomer. DNA wrap is dependent on ATP binding by UvrB and probably causes local melting of the DNA helix, facilitating insertion of UvrB beta-hairpin between the DNA strands. Then UvrB probes one DNA strand for the presence of a lesion. If a lesion is found the UvrA subunits dissociate and the UvrB-DNA preincision complex is formed. This complex is subsequently bound by UvrC and the second UvrB is released. If no lesion is found, the DNA wraps around the other UvrB subunit that will check the other stand for damage. The polypeptide is UvrABC system protein B (Mycobacterium tuberculosis (strain CDC 1551 / Oshkosh)).